The sequence spans 1379 residues: Vascular endothelial growth factor receptor 3 (1379 aa).

The first 19 residues, 1–19 (MKRVCTLPLWLWLGIVSEA), serve as a signal peptide directing secretion. Topologically, residues 20–788 (DLVSSYSMTP…EGSDDKTNVE (769 aa)) are extracellular. Ig-like C2-type domains are found at residues 30–136 (PTLS…TAVS), 160–222 (KENT…IDNK), 240–335 (DIQL…TDVI), 340–421 (PFIN…KRIS), 430–566 (PRIH…FYVT), 569–684 (PDGF…KYIS), and 691–777 (PRLK…ASVS). 2 disulfides stabilise this stretch: C51–C120 and C167–C215. The disordered stretch occupies residues 73 to 93 (RRWNSQPQQRPVGAGNPEEDC). 4 N-linked (GlcNAc...) asparagine glycosylation sites follow: N113, N175, N260, and N308. A disulfide bridge connects residues C261 and C319. 3 disulfide bridges follow: C453–C548, C474–C500, and C592–C666. N-linked (GlcNAc...) asparagine glycans are attached at residues N529, N541, N596, N608, N655, N696, and N703. An intrachain disulfide couples C712 to C761. The N-linked (GlcNAc...) asparagine glycan is linked to N771. Residues 789–809 (IVILIGTGVIAVFFWILLIII) traverse the membrane as a helical segment. Residues 810–1379 (FCNIKRPAHA…LHASFFSEQY (570 aa)) are Cytoplasmic-facing. In terms of domain architecture, Protein kinase spans 858–1185 (LRLGKVLGHG…DLVEILGNLL (328 aa)). ATP contacts are provided by residues 864 to 872 (LGHGAFGKV) and K892. Catalysis depends on D1049, which acts as the Proton acceptor. 2 positions are modified to phosphotyrosine; by autocatalysis: Y1075 and Y1080. The disordered stretch occupies residues 1196-1224 (YIPLNDSHSSEDDGFSQVPSSAQQNSDEE). Residues Y1239, Y1240, Y1274, Y1342, and Y1346 each carry the phosphotyrosine; by autocatalysis modification. Residues 1299 to 1379 (RHRKEGGFSS…LHASFFSEQY (81 aa)) form a disordered region. A compositionally biased stretch (polar residues) spans 1332-1343 (YGSQVGGQTFYN).

This sequence belongs to the protein kinase superfamily. Tyr protein kinase family. CSF-1/PDGF receptor subfamily. Interacts with VEGFC and VEGFD. Monomer in the absence of bound VEGFC or VEGFD. Homodimer in the presence of bound VEGFC or VEGFD. Post-translationally, autophosphorylated on tyrosine residues upon ligand binding. Autophosphorylation occurs in trans, i.e. one subunit of the dimeric receptor phosphorylates tyrosine residues on the other subunit.

It localises to the cell membrane. The protein resides in the cytoplasm. It is found in the nucleus. The enzyme catalyses L-tyrosyl-[protein] + ATP = O-phospho-L-tyrosyl-[protein] + ADP + H(+). Its activity is regulated as follows. Present in an inactive conformation in the absence of bound ligand. Binding of VEGFC or VEGFD leads to dimerization and activation by autophosphorylation on tyrosine residues. Functionally, tyrosine-protein kinase that acts as a cell-surface receptor for VEGFC and VEGFD, and plays an essential role in lymphangiogenesis and in the development of the vascular network and the cardiovascular system during embryonic development. Promotes proliferation, survival and migration of endothelial cells, and regulates angiogenic sprouting. Mediates activation of the MAPK1/ERK2, MAPK3/ERK1 signaling pathway, of MAPK8 and the JUN signaling pathway, and of the AKT1 signaling pathway. The polypeptide is Vascular endothelial growth factor receptor 3 (FLT4) (Coturnix coturnix (Common quail)).